Here is a 126-residue protein sequence, read N- to C-terminus: Urease subunit beta (126 aa).

It belongs to the urease beta subunit family. Heterotrimer of UreA (gamma), UreB (beta) and UreC (alpha) subunits. Three heterotrimers associate to form the active enzyme.

Its subcellular location is the cytoplasm. The enzyme catalyses urea + 2 H2O + H(+) = hydrogencarbonate + 2 NH4(+). It participates in nitrogen metabolism; urea degradation; CO(2) and NH(3) from urea (urease route): step 1/1. This is Urease subunit beta from Haloquadratum walsbyi (strain DSM 16790 / HBSQ001).